The following is a 241-amino-acid chain: Enterotoxin type H (241 aa).

Residues 1 to 24 (MINKIKILFSFLALLLSFTSYAKA) form the signal peptide. A disulfide bridge connects residues C106 and C116. D191, H230, and D232 together coordinate Zn(2+).

The protein belongs to the staphylococcal/streptococcal toxin family. As to quaternary structure, interacts with host MHC class II molecules composed of alpha/HLA-DRA and beta/HLA-DRB1 chains. Interacts with host TCR alpha-chain TRAV27. It depends on Zn(2+) as a cofactor.

Its subcellular location is the secreted. Functionally, staphylococcal enterotoxin that activates the host immune system by binding as unprocessed molecules to major histocompatibility (MHC) complex class II and T-cell receptor (TCR) molecules via their alpha domain, in particular TRAV27. In turn, this ternary complex activates a large number of T-lymphocytes initiating a systemic release of pro-inflammatory cytokines. Also causes the intoxication staphylococcal food poisoning syndrome. The illness characterized by high fever, hypotension, diarrhea, shock, and in some cases death. This chain is Enterotoxin type H (entH), found in Staphylococcus aureus.